The primary structure comprises 219 residues: Ras-related protein Rab-3B (219 aa).

At Ala-2 the chain carries N-acetylalanine. Positions 31, 32, 33, 34, 35, 36, 37, 49, and 53 each coordinate GTP. Thr-36 is a Mg(2+) binding site. The Switch 1 signature appears at 45-58 (DTFTPAFVSTVGID). Thr-54 and Asp-77 together coordinate Mg(2+). The Switch 2 signature appears at 78-96 (TAGQERYRTITTAYYRGAM). Gly-80 serves as a coordination point for GTP. Thr-86 bears the Phosphothreonine; by LRRK2 mark. Residues Asn-135, Lys-136, Asp-138, Ala-166, and Lys-167 each coordinate GTP. Phosphoserine is present on residues Ser-188 and Ser-190. 2 S-geranylgeranyl cysteine lipidation sites follow: Cys-217 and Cys-219. At Cys-219 the chain carries Cysteine methyl ester.

This sequence belongs to the small GTPase superfamily. Rab family. Interacts with RIMS1, RIMS2, RPH3A and RPH3AL. The GTP-bound form interacts with GAS8/DRC4 (via coiled-coil domains). Interacts with GDI2, CHM and CHML; phosphorylation at Thr-86 disrupts these interactions. Interacts with MADD (via uDENN domain); the GTP-bound form is preferred for interaction. Mg(2+) is required as a cofactor. Phosphorylation of Thr-86 in the switch II region by LRRK2 prevents the association of RAB regulatory proteins, including CHM, CHML and RAB GDP dissociation inhibitor GDI2. In terms of tissue distribution, abundantly expressed in testis, lung and brain.

The protein resides in the cell membrane. It localises to the golgi apparatus. The enzyme catalyses GTP + H2O = GDP + phosphate + H(+). Regulated by guanine nucleotide exchange factors (GEFs) which promote the exchange of bound GDP for free GTP. Regulated by GTPase activating proteins (GAPs) which increase the GTP hydrolysis activity. Inhibited by GDP dissociation inhibitors (GDIs) which prevent Rab-GDP dissociation. The small GTPases Rab are key regulators of intracellular membrane trafficking, from the formation of transport vesicles to their fusion with membranes. Rabs cycle between an inactive GDP-bound form and an active GTP-bound form that is able to recruit to membranes different sets of downstream effectors directly responsible for vesicle formation, movement, tethering and fusion. The protein is Ras-related protein Rab-3B of Mus musculus (Mouse).